The following is a 606-amino-acid chain: Glucose methanol choline oxidoreductase atC (606 aa).

An N-terminal signal peptide occupies residues 1 to 19 (MRVFPTYIAVSGLFGGAFA). Asn-43, Asn-69, Asn-87, Asn-290, Asn-368, Asn-418, Asn-421, and Asn-552 each carry an N-linked (GlcNAc...) asparagine glycan.

This sequence belongs to the GMC oxidoreductase family.

The catalysed reaction is terremutin + A = terreate + AH2. The protein operates within secondary metabolite biosynthesis. In terms of biological role, glucose methanol choline oxidoreductase; part of the gene cluster that mediates the biosynthesis of terreic acid, a quinone epoxide inhibitor of Bruton's tyrosine kinase. The first step of the pathway is the synthesis of 6-methylsalicylic acid (6-MSA) by the 6-methylsalicylic acid synthase atX. In the biosynthesis of 6-MSA, atX utilizes one acetyl-CoA and three malonyl-CoAs as its substrates and catalyzes a series of programmed reactions including Claisen condensation, reduction, aldol cyclization, and the hydrolytic cleavage that yields 6-MSA. The 6-methylsalicylate 1-monooxygenase atA then catalyzes the decarboxylative hydroxylation of 6-MSA to 3-methylcatechol. The next step is the conversion of 3-methylcatechol to 3-methyl-1,2,4-benzenetriol by cytochrome P450 monooxygenase atE, which is enhanced by cytochrome P450 monooxygenase atG. Then, the epoxidase atD catalyzes the epoxidation and hydroxyl oxidation of 3-methyl-1,2,4-benzenetriol to terremutin. Lastly, GMC oxidoreductase atC oxidizes terremutin to terreic acid. This chain is Glucose methanol choline oxidoreductase atC, found in Aspergillus terreus (strain NIH 2624 / FGSC A1156).